The sequence spans 205 residues: Glycerol-3-phosphate acyltransferase (205 aa).

At 1-3 the chain is on the periplasmic side; the sequence is MSA. The chain crosses the membrane as a helical span at residues 4–24; sequence IAPGMILFAYLCGSISSAILV. Residues 25–52 lie on the Cytoplasmic side of the membrane; it reads CRIAGLPDPRESGSGNPGATNVLRIGGK. Residues 53–73 traverse the membrane as a helical segment; that stretch reads GAAVAVLIFDILKGMLPVWGA. Residues 74-80 are Periplasmic-facing; sequence YALGVTP. Residues 81-101 form a helical membrane-spanning segment; the sequence is FWLGLIAIAACLGHIWPVFFG. Residues 102–111 are Cytoplasmic-facing; sequence FKGGKGVATA. The chain crosses the membrane as a helical span at residues 112–132; that stretch reads FGAIAPIGWDLTGVMAGTWLL. At 133-137 the chain is on the periplasmic side; that stretch reads TVLLS. Residues 138-158 form a helical membrane-spanning segment; that stretch reads GYSSLGAIVSALIAPFYVWWF. Residues 159–205 lie on the Cytoplasmic side of the membrane; sequence KPQFTFPVSMLSCLILLRHHDNIQRLWRRQETKIWTKLKKKRQKDSE.

The protein belongs to the PlsY family. Probably interacts with PlsX.

The protein localises to the cell inner membrane. It carries out the reaction sn-glycerol 3-phosphate + an acyl-CoA = a 1-acyl-sn-glycero-3-phosphate + CoA. The enzyme catalyses a fatty acyl-[ACP] + sn-glycerol 3-phosphate = a 1-acyl-sn-glycero-3-phosphate + holo-[ACP]. The protein operates within lipid metabolism; phospholipid metabolism. Its function is as follows. Catalyzes the transfer of an acyl group from acyl-ACP to glycerol-3-phosphate (G3P) to form lysophosphatidic acid (LPA). This enzyme can also utilize acyl-CoA as fatty acyl donor, but not acyl-PO(4). The polypeptide is Glycerol-3-phosphate acyltransferase (Salmonella schwarzengrund (strain CVM19633)).